The chain runs to 194 residues: Ribonuclease HII (194 aa).

The 191-residue stretch at 3–193 folds into the RNase H type-2 domain; it reads ILTAGVDEAG…VRNLFAQQAL (191 aa). 3 residues coordinate a divalent metal cation: aspartate 9, glutamate 10, and aspartate 101.

This sequence belongs to the RNase HII family. It depends on Mn(2+) as a cofactor. Mg(2+) serves as cofactor.

Its subcellular location is the cytoplasm. It catalyses the reaction Endonucleolytic cleavage to 5'-phosphomonoester.. Functionally, endonuclease that specifically degrades the RNA of RNA-DNA hybrids. The polypeptide is Ribonuclease HII (Neisseria meningitidis serogroup C / serotype 2a (strain ATCC 700532 / DSM 15464 / FAM18)).